The sequence spans 40 residues: Photosystem II reaction center protein Y (40 aa).

The helical transmembrane segment at 5–23 threads the bilayer; it reads LVLVASPILLAVGWAGFNI.

This sequence belongs to the PsbY family. As to quaternary structure, PSII is composed of 1 copy each of membrane proteins PsbA, PsbB, PsbC, PsbD, PsbE, PsbF, PsbH, PsbI, PsbJ, PsbK, PsbL, PsbM, PsbT, PsbX, PsbY, PsbZ, Psb30/Ycf12, peripheral proteins PsbO, CyanoQ (PsbQ), PsbU, PsbV and a large number of cofactors. It forms dimeric complexes.

Its subcellular location is the cellular thylakoid membrane. Functionally, loosely associated component of the core of photosystem II (PSII), it is not always seen in crystals. PSII is a light-driven water plastoquinone oxidoreductase, using light energy to abstract electrons from H(2)O, generating a proton gradient subsequently used for ATP formation. The chain is Photosystem II reaction center protein Y from Synechococcus sp. (strain RCC307).